The primary structure comprises 128 residues: Large ribosomal subunit protein eL31 (128 aa).

The protein belongs to the eukaryotic ribosomal protein eL31 family.

In Drosophila virilis (Fruit fly), this protein is Large ribosomal subunit protein eL31 (RpL31).